Reading from the N-terminus, the 269-residue chain is Tryptophan synthase alpha chain (269 aa).

Active-site proton acceptor residues include Glu49 and Asp60.

It belongs to the TrpA family. As to quaternary structure, tetramer of two alpha and two beta chains.

It carries out the reaction (1S,2R)-1-C-(indol-3-yl)glycerol 3-phosphate + L-serine = D-glyceraldehyde 3-phosphate + L-tryptophan + H2O. It functions in the pathway amino-acid biosynthesis; L-tryptophan biosynthesis; L-tryptophan from chorismate: step 5/5. Functionally, the alpha subunit is responsible for the aldol cleavage of indoleglycerol phosphate to indole and glyceraldehyde 3-phosphate. The protein is Tryptophan synthase alpha chain of Pseudomonas putida (strain GB-1).